Reading from the N-terminus, the 385-residue chain is tRNA-specific 2-thiouridylase MnmA (385 aa).

Residues 29-36 (GLSGGVDS) and leucine 55 each bind ATP. Catalysis depends on cysteine 116, which acts as the Nucleophile. Cysteine 116 and cysteine 225 are joined by a disulfide. Glycine 141 is an ATP binding site. The interaction with tRNA stretch occupies residues 175 to 177 (KDQ). Cysteine 225 (cysteine persulfide intermediate) is an active-site residue. An interaction with tRNA region spans residues 330–331 (RY).

The protein belongs to the MnmA/TRMU family.

The protein resides in the cytoplasm. The enzyme catalyses S-sulfanyl-L-cysteinyl-[protein] + uridine(34) in tRNA + AH2 + ATP = 2-thiouridine(34) in tRNA + L-cysteinyl-[protein] + A + AMP + diphosphate + H(+). Functionally, catalyzes the 2-thiolation of uridine at the wobble position (U34) of tRNA, leading to the formation of s(2)U34. This is tRNA-specific 2-thiouridylase MnmA from Prochlorococcus marinus (strain AS9601).